Consider the following 162-residue polypeptide: UPF0114 protein Psyr_4257 (162 aa).

4 helical membrane passes run 15-35 (LLAPIYFGLSLGLLALCLKFF), 53-73 (LILVLLSLIDMALVGGLLVMV), 109-129 (VAASIVAISSIHLLRVFMDAT), and 136-156 (LMWYVIIHMTFVISAFAMGYL).

It belongs to the UPF0114 family.

It is found in the cell membrane. The chain is UPF0114 protein Psyr_4257 from Pseudomonas syringae pv. syringae (strain B728a).